Consider the following 510-residue polypeptide: MIWHVQNENFILDSTRIFMKAFHLLLFDGSFIFPECILIFGLILLLMIDSTSDQKDIPWLYFISSTSLVMSITALLFRWREEPMISFSGNFQTNNFNEIFQFLILLCSTLCIPLSVEYIECTEMAITEFLLFVLTATLGGMFLCGANDLITIFVAPECFSLCSYLLSGYTKKDVRSNEATTKYLLMGGASSSILVHGFSWLYGSSGGEIELQEIVNGLLNTQMYNSPGISIALIFITVGIGFKLSPAPSHQWTPDVYEGSPTPVVAFLSVTSKVAASASATRIFDIPFYFSSNEWHLLLEILAILSMILGNLIAITQTSMKRMLAYSSIGQIGYVIIGIIVGDSNGGYASMITYMLFYIAMNLGTFARIVSFGLRTGTDNIRDYAGLYTKDPLLALSLALCLLSLGGLPPLAGFFGKLHLFWCGWQAGLYFLVSIGLLTSVVSIYYYLKIIKLLMTGRNQEITPHVRNYRRSPLRSNNSIELSMIVCVIASTIPGISMNPIIEIAQDTLF.

Helical transmembrane passes span 24–44, 57–77, 99–119, 124–144, 149–169, 183–203, 227–247, 295–315, 323–343, 347–367, 395–415, 418–438, and 482–502; these read LLLFDGSFIFPECILIFGLIL, IPWLYFISSTSLVMSITALLF, IFQFLILLCSTLCIPLSVEYI, MAITEFLLFVLTATLGGMFLC, LITIFVAPECFSLCSYLLSGY, YLLMGGASSSILVHGFSWLYG, PGISIALIFITVGIGFKLSPA, WHLLLEILAILSMILGNLIAI, MLAYSSIGQIGYVIIGIIVGD, GYASMITYMLFYIAMNLGTFA, ALSLALCLLSLGGLPPLAGFF, LHLFWCGWQAGLYFLVSIGLL, and LSMIVCVIASTIPGISMNPII.

It belongs to the complex I subunit 2 family. As to quaternary structure, NDH is composed of at least 16 different subunits, 5 of which are encoded in the nucleus.

The protein resides in the plastid. Its subcellular location is the chloroplast thylakoid membrane. It carries out the reaction a plastoquinone + NADH + (n+1) H(+)(in) = a plastoquinol + NAD(+) + n H(+)(out). It catalyses the reaction a plastoquinone + NADPH + (n+1) H(+)(in) = a plastoquinol + NADP(+) + n H(+)(out). Functionally, NDH shuttles electrons from NAD(P)H:plastoquinone, via FMN and iron-sulfur (Fe-S) centers, to quinones in the photosynthetic chain and possibly in a chloroplast respiratory chain. The immediate electron acceptor for the enzyme in this species is believed to be plastoquinone. Couples the redox reaction to proton translocation, and thus conserves the redox energy in a proton gradient. This Cucumis sativus (Cucumber) protein is NAD(P)H-quinone oxidoreductase subunit 2 B, chloroplastic.